The primary structure comprises 123 residues: Urotensin-2 (123 aa).

A signal peptide spans 1–20 (MDRVPFCCLLFIGLLNPLLS). 2 propeptides span residues 21-104 (LPVT…LART) and 107-109 (QHK). Residues 57 to 88 (RQTMGTEAGESPGEAGPSTETPTPRGSMRKAF) form a disordered region. Cys-117 and Cys-122 are disulfide-bonded.

This sequence belongs to the urotensin-2 family. As to expression, brain specific. Predominantly expressed in motoneurons of the brainstem and spinal cord.

It localises to the secreted. Functionally, highly potent vasoconstrictor. In Mus musculus (Mouse), this protein is Urotensin-2 (Uts2).